The chain runs to 1392 residues: FERM and PDZ domain-containing protein 2 (1392 aa).

In terms of domain architecture, KIND spans 15–197; that stretch reads VTLASALQVR…SEVERRVVEE (183 aa). Residues 211-246 are disordered; sequence SRLHQADGESPGAPASDALQPRRVSERSAETQSSLE. Positions 342–642 constitute an FERM domain; the sequence is CVVLLNGRCL…WFNAQTGSKH (301 aa). One can recognise a PDZ 1 domain in the interval 775-861; that stretch reads GLFGEPNQDI…MAVRMIQNSP (87 aa). The interval 903-930 is disordered; it reads GRQSPHIHDQDRSVRGTEMAQGAGSCPP. Over residues 908–917 the composition is skewed to basic and acidic residues; that stretch reads HIHDQDRSVR. The interval 937–1027 is interaction with GRIN2A and GRIN2B; it reads TGEIYFVELV…VARLVLERRG (91 aa). PDZ domains are found at residues 950 to 1035 and 1079 to 1167; these read GTLG…PQCP and RGLG…PEME. The disordered stretch occupies residues 1186 to 1236; sequence CAGSEQSPSLDQEDNWRDSTSLDAGEGLSPGPESSYKDVRQVKGDREKERP. A compositionally biased stretch (basic and acidic residues) spans 1220–1236; the sequence is SYKDVRQVKGDREKERP.

Interacts (via the second PDZ domain) with CTNND2 (via the extreme C-terminus). Interacts (via the second PDZ domain) with PKP4 (via the extreme C-terminus); the interaction directs FRMPD2 to the basolateral membranes. Interacts (via the second PDZ domain) with ARVCF (via the extreme C-terminus). Interacts (via the second PDZ domain) with NMDAR subunits GRIN2A/GLUN2A and GRIN2B/GLUN2B (via the extreme C-terminus); the interaction is direct and is likely to promote NMDAR-mediated neural signal transmission. Binds GRIN2A with lower affinity than GRIN2B. Interacts (via the third PDZ domain) with LRIT1 (via the extreme C-terminus); the interaction leads to their colocalization in photoreceptor synapses. Interacts with NOD2; the interaction is likely to trigger NOD2-mediated nuclear factor kappaB activation.

The protein localises to the cytoplasm. It localises to the postsynaptic density. It is found in the basolateral cell membrane. Its subcellular location is the cell junction. The protein resides in the tight junction. Functionally, functions as a scaffold protein and likely plays a role in N-methyl-D-aspartic acid receptor (NMDAR)-mediated synaptic excitatory transmission. May be involved in synapse formation in cone photoreceptor cells. May play a role in the regulation of tight junction formation. Binds phosphatidylinositol 3,4-bisphosphate (PtdIns(3,4)P2). May pNF-kappa-Blay a role in the regulation of NOD2-mediated NF-kappa-B activation in immune response. The polypeptide is FERM and PDZ domain-containing protein 2 (Mus musculus (Mouse)).